A 319-amino-acid polypeptide reads, in one-letter code: Large ribosomal subunit protein uL10 (319 aa).

Residues 286–319 form a disordered region; the sequence is AGDSGASAAPKEEEKAAEPEEESDEEMGFSLFDD. Residues 304 to 319 show a composition bias toward acidic residues; that stretch reads PEEESDEEMGFSLFDD.

This sequence belongs to the universal ribosomal protein uL10 family. In terms of assembly, P0 forms a pentameric complex by interaction with dimers of P1 and P2. Post-translationally, phosphorylated.

Ribosomal protein P0 is the functional equivalent of E.coli protein L10. This chain is Large ribosomal subunit protein uL10 (RP-P0), found in Zea mays (Maize).